Here is a 30-residue protein sequence, read N- to C-terminus: Trypsin inhibitor 3 (30 aa).

3 disulfide bridges follow: Cys-4-Cys-21, Cys-11-Cys-23, and Cys-17-Cys-29.

Belongs to the protease inhibitor I7 (squash-type serine protease inhibitor) family.

It localises to the secreted. In terms of biological role, inhibits trypsin. This is Trypsin inhibitor 3 from Momordica charantia (Bitter gourd).